The sequence spans 815 residues: Leucine--tRNA ligase (815 aa).

The short motif at Pro-42–His-52 is the 'HIGH' region element. Positions Lys-574–Ser-578 match the 'KMSKS' region motif. Lys-577 is an ATP binding site.

The protein belongs to the class-I aminoacyl-tRNA synthetase family.

It is found in the cytoplasm. The enzyme catalyses tRNA(Leu) + L-leucine + ATP = L-leucyl-tRNA(Leu) + AMP + diphosphate. The sequence is that of Leucine--tRNA ligase from Marinomonas sp. (strain MWYL1).